A 389-amino-acid chain; its full sequence is Chalcone synthase 4 (389 aa).

Residue Cys-164 is part of the active site.

The protein belongs to the thiolase-like superfamily. Chalcone/stilbene synthases family.

The enzyme catalyses (E)-4-coumaroyl-CoA + 3 malonyl-CoA + 3 H(+) = 2',4,4',6'-tetrahydroxychalcone + 3 CO2 + 4 CoA. It functions in the pathway secondary metabolite biosynthesis; flavonoid biosynthesis. The primary product of this enzyme is 4,2',4',6'-tetrahydroxychalcone (also termed naringenin-chalcone or chalcone) which can under specific conditions spontaneously isomerize into naringenin. This chain is Chalcone synthase 4 (CHS4), found in Medicago sativa (Alfalfa).